The chain runs to 198 residues: Pyridoxal 5'-phosphate synthase subunit PdxT (198 aa).

50–52 contacts L-glutamine; it reads GES. Cysteine 82 serves as the catalytic Nucleophile. L-glutamine contacts are provided by residues arginine 114 and 143–144; that span reads IR. Catalysis depends on charge relay system residues histidine 179 and glutamate 181.

The protein belongs to the glutaminase PdxT/SNO family. In terms of assembly, in the presence of PdxS, forms a dodecamer of heterodimers. Only shows activity in the heterodimer.

It catalyses the reaction aldehydo-D-ribose 5-phosphate + D-glyceraldehyde 3-phosphate + L-glutamine = pyridoxal 5'-phosphate + L-glutamate + phosphate + 3 H2O + H(+). The catalysed reaction is L-glutamine + H2O = L-glutamate + NH4(+). Its pathway is cofactor biosynthesis; pyridoxal 5'-phosphate biosynthesis. In terms of biological role, catalyzes the hydrolysis of glutamine to glutamate and ammonia as part of the biosynthesis of pyridoxal 5'-phosphate. The resulting ammonia molecule is channeled to the active site of PdxS. This chain is Pyridoxal 5'-phosphate synthase subunit PdxT, found in Metallosphaera sedula (strain ATCC 51363 / DSM 5348 / JCM 9185 / NBRC 15509 / TH2).